A 211-amino-acid chain; its full sequence is Cytidylate kinase (211 aa).

Residue 7–15 participates in ATP binding; that stretch reads GPAASGKGT.

It belongs to the cytidylate kinase family. Type 1 subfamily.

It localises to the cytoplasm. The enzyme catalyses CMP + ATP = CDP + ADP. It catalyses the reaction dCMP + ATP = dCDP + ADP. This chain is Cytidylate kinase, found in Rhodopseudomonas palustris (strain BisA53).